A 433-amino-acid chain; its full sequence is MNVTSPKDGNHSFSKKNRFNTNKPRFHKLNEQAQSINLPEDRDSIVSSNTTSIMTDDAFDYNEGIASRTKNINSDSDRSNDTIKQNNYNKRETGYNPFYNGSGINQRYTQFRKREFEPTLAENKAEEYISDEDNVKIDEDNIENELQFTPKIKEASILRSSLLGQRNVLNTRNPKSKESHIKVKPIINNKSSSQRKSSAALRKQLGKPLPLPYLNSPNSDSTPTLQRKEEVFTDEVLQKKRELIESKWHRLLFHDKKMVEKKLESLREYERKRMPPRGTDVSSSEQDNSFKISTPTKSYVSLEQKPLPNLSAMNNFNDVTDNKEKEETNNNILKFQAQRDPLQILQSEIEMHTKKLDTIIELLKDDTDSKEKRKVVTNDNAAPEQMVNKGWRKNVMMIYKKSGNIMKKYREYFLWTICILILLYCNIYVYYRF.

Disordered regions lie at residues 1–38 (MNVT…SINL), 69–101 (TKNI…FYNG), and 207–227 (KPLP…TLQR). Phosphothreonine is present on threonine 233.

As to quaternary structure, interacts with SPC72.

Its subcellular location is the cytoplasm. The protein resides in the cytoskeleton. It localises to the microtubule organizing center. The protein localises to the spindle pole body. Its function is as follows. KAR1 is required for function of both intranuclear and extranuclear microtubules. KAR1 helps localize CDC31 to the spindle pole body (SPB), CDC31 then initiates SPB duplication via interaction with a downstream effector. The polypeptide is Cell division control protein KAR1 (KAR1) (Saccharomyces cerevisiae (strain ATCC 204508 / S288c) (Baker's yeast)).